Here is a 201-residue protein sequence, read N- to C-terminus: CASP-like protein 2B2 (201 aa).

The Cytoplasmic segment spans residues 1 to 28 (MSYLGVGVSPGNVTGSSTKMKLIDRKVR). Residues 29–49 (VTELILRSLVCAFALVAAILV) traverse the membrane as a helical segment. Over 50–71 (ATDVQVREIFTIQKKAKFTDMK) the chain is Extracellular. A helical transmembrane segment spans residues 72–92 (ALVFLVVINGIAAGYSLVQAV). Residues 93–108 (CCLVGLMKGSVLLSEP) are Cytoplasmic-facing. Residues 109–129 (LAWAIFFGDQAVAYLCVAGVA) form a helical membrane-spanning segment. Over 130 to 166 (AAAQSAAFAKLGQPELQWMKICDMYGKFCNQVGEGIA) the chain is Extracellular. A helical transmembrane segment spans residues 167–187 (SALFACIGMVLISCISAFGVF). The Cytoplasmic segment spans residues 188–201 (RLYGGSKPRQSSRW).

This sequence belongs to the Casparian strip membrane proteins (CASP) family. As to quaternary structure, homodimer and heterodimers.

The protein resides in the cell membrane. The chain is CASP-like protein 2B2 from Arabidopsis lyrata subsp. lyrata (Lyre-leaved rock-cress).